A 155-amino-acid chain; its full sequence is Interleukin-2 (155 aa).

An N-terminal signal peptide occupies residues 1-20 (MYKIQLLSCIALTLALVANG). A glycan (O-linked (GalNAc...) threonine) is linked at T23. C79 and C127 are disulfide-bonded.

It belongs to the IL-2 family.

The protein localises to the secreted. Its function is as follows. Cytokine produced by activated CD4-positive helper T-cells and to a lesser extend activated CD8-positive T-cells and natural killer (NK) cells that plays pivotal roles in the immune response and tolerance. Binds to a receptor complex composed of either the high-affinity trimeric IL-2R (IL2RA/CD25, IL2RB/CD122 and IL2RG/CD132) or the low-affinity dimeric IL-2R (IL2RB and IL2RG). Interaction with the receptor leads to oligomerization and conformation changes in the IL-2R subunits resulting in downstream signaling starting with phosphorylation of JAK1 and JAK3. In turn, JAK1 and JAK3 phosphorylate the receptor to form a docking site leading to the phosphorylation of several substrates including STAT5. This process leads to activation of several pathways including STAT, phosphoinositide-3-kinase/PI3K and mitogen-activated protein kinase/MAPK pathways. Functions as a T-cell growth factor and can increase NK-cell cytolytic activity as well. Promotes strong proliferation of activated B-cells and subsequently immunoglobulin production. Plays a pivotal role in regulating the adaptive immune system by controlling the survival and proliferation of regulatory T-cells, which are required for the maintenance of immune tolerance. Moreover, participates in the differentiation and homeostasis of effector T-cell subsets, including Th1, Th2, Th17 as well as memory CD8-positive T-cells. In Bos taurus (Bovine), this protein is Interleukin-2 (IL2).